The sequence spans 139 residues: Arsenate reductase (139 aa).

Residues C10, C82, and C89 each act as nucleophile in the active site. Intrachain disulfides connect C10-C82 and C82-C89.

This sequence belongs to the low molecular weight phosphotyrosine protein phosphatase family. Thioredoxin-coupled ArsC subfamily.

Its subcellular location is the cytoplasm. It catalyses the reaction arsenate + [thioredoxin]-dithiol + H(+) = arsenite + [thioredoxin]-disulfide + H2O. In terms of biological role, catalyzes the reduction of arsenate [As(V)] to arsenite [As(III)]. The chain is Arsenate reductase from Halalkalibacterium halodurans (strain ATCC BAA-125 / DSM 18197 / FERM 7344 / JCM 9153 / C-125) (Bacillus halodurans).